Consider the following 544-residue polypeptide: MSIFIGGAWPYANGSLHLGHIASLLPGDILARYYRSKGENVLYVSGSDCNGTPIAIRAKQEGVTAKEIADQYHEEFQRCFRSLGFTYDCYTRTDSEHHHETVQNVFLRLLEEGHIYKKIVEQAYCETCTQFLPDRYVEGICPHCHEAARGDQCDACSAILDPLDLLEKKCKLCGSTPSVQETEHFYFALHTFQEQIKRAVEIAKQTGTWRDNAIQLTERYVKEGLLDRAVSRDLPIGVPIPVEGYEDKKIYVWIEAVTGYYSASKHWAEETGKDDQEFWDSEAKTYYVHGKDNIPFHSVIWPAVLLGIGEEAIPRHIVSNEYLTVEKRKLSTSKNWAVWVPDILERYDPDSIRYFLTVNAPENRDTDFSWREFIYSHNSELLGAYGNFVNRTLKFIEKYYGGIVPKRSIEVELKDKVEGLYKHVGEAIEQTKFKVALETIFDAVRFANKYFDEKQPWKQREDDPVSCEETIYNCVYLIANFANLLEPFLPFSSERVRNTLSIVKRNWEPQNTLPSRIDSVQPLFERIDVKQIEHEIEKLYGAVK.

The 'HIGH' region motif lies at 10–20; it reads PYANGSLHLGH. The Zn(2+) site is built by Cys141, Cys144, Cys153, and Cys156. Positions 329 to 333 match the 'KMSKS' region motif; that stretch reads KLSTS. Thr332 is a binding site for ATP.

Belongs to the class-I aminoacyl-tRNA synthetase family. MetG type 1 subfamily. Monomer. Zn(2+) is required as a cofactor.

It localises to the cytoplasm. It catalyses the reaction tRNA(Met) + L-methionine + ATP = L-methionyl-tRNA(Met) + AMP + diphosphate. In terms of biological role, is required not only for elongation of protein synthesis but also for the initiation of all mRNA translation through initiator tRNA(fMet) aminoacylation. In Bacillus cereus (strain ATCC 14579 / DSM 31 / CCUG 7414 / JCM 2152 / NBRC 15305 / NCIMB 9373 / NCTC 2599 / NRRL B-3711), this protein is Methionine--tRNA ligase 2.